The sequence spans 383 residues: Arginine biosynthesis bifunctional protein ArgJ 1 (383 aa).

The interval 1–25 (MTVTAPKGSTGGGCRRGSKESGQPD) is disordered. Substrate contacts are provided by Thr146, Lys168, Thr179, Glu259, Asn378, and Ser383. Catalysis depends on Thr179, which acts as the Nucleophile.

The protein belongs to the ArgJ family. As to quaternary structure, heterotetramer of two alpha and two beta chains.

Its subcellular location is the cytoplasm. It carries out the reaction N(2)-acetyl-L-ornithine + L-glutamate = N-acetyl-L-glutamate + L-ornithine. The enzyme catalyses L-glutamate + acetyl-CoA = N-acetyl-L-glutamate + CoA + H(+). It participates in amino-acid biosynthesis; L-arginine biosynthesis; L-ornithine and N-acetyl-L-glutamate from L-glutamate and N(2)-acetyl-L-ornithine (cyclic): step 1/1. Its pathway is amino-acid biosynthesis; L-arginine biosynthesis; N(2)-acetyl-L-ornithine from L-glutamate: step 1/4. Catalyzes two activities which are involved in the cyclic version of arginine biosynthesis: the synthesis of N-acetylglutamate from glutamate and acetyl-CoA as the acetyl donor, and of ornithine by transacetylation between N(2)-acetylornithine and glutamate. This Streptomyces clavuligerus protein is Arginine biosynthesis bifunctional protein ArgJ 1.